We begin with the raw amino-acid sequence, 315 residues long: Small ribosomal subunit protein uS2 (315 aa).

The interval leucine 250 to glutamate 315 is disordered. Basic and acidic residues-rich tracts occupy residues valine 272–aspartate 282 and threonine 297–glutamate 315.

Belongs to the universal ribosomal protein uS2 family.

This is Small ribosomal subunit protein uS2 from Clavibacter michiganensis subsp. michiganensis (strain NCPPB 382).